Reading from the N-terminus, the 130-residue chain is Small ribosomal subunit protein uS11 (130 aa).

The protein belongs to the universal ribosomal protein uS11 family. Part of the 30S ribosomal subunit. Interacts with proteins S7 and S18. Binds to IF-3.

Its function is as follows. Located on the platform of the 30S subunit, it bridges several disparate RNA helices of the 16S rRNA. Forms part of the Shine-Dalgarno cleft in the 70S ribosome. In Prochlorococcus marinus (strain MIT 9312), this protein is Small ribosomal subunit protein uS11.